Reading from the N-terminus, the 666-residue chain is Secreted protein ARB_01864 (666 aa).

Positions M1–A18 are cleaved as a signal peptide. N-linked (GlcNAc...) asparagine glycans are attached at residues N160, N216, N342, N405, N594, N600, and N662. The interval R323–P353 is disordered.

Its subcellular location is the secreted. The sequence is that of Secreted protein ARB_01864 from Arthroderma benhamiae (strain ATCC MYA-4681 / CBS 112371) (Trichophyton mentagrophytes).